The primary structure comprises 290 residues: 4-hydroxybenzoate octaprenyltransferase (290 aa).

Helical transmembrane passes span 20–40, 43–63, 92–112, 114–131, 135–155, 160–180, 209–229, 231–251, and 266–286; these read IGIL…AEGV, LDIL…GCVV, EALL…QPLN, LTIE…SYPF, FFAM…PMAF, GEVP…VIAY, VVGV…IGLL, NLGV…LYQY, and FLHN…DYLV.

Belongs to the UbiA prenyltransferase family. The cofactor is Mg(2+).

It localises to the cell inner membrane. The enzyme catalyses all-trans-octaprenyl diphosphate + 4-hydroxybenzoate = 4-hydroxy-3-(all-trans-octaprenyl)benzoate + diphosphate. It functions in the pathway cofactor biosynthesis; ubiquinone biosynthesis. Its function is as follows. Catalyzes the prenylation of para-hydroxybenzoate (PHB) with an all-trans polyprenyl group. Mediates the second step in the final reaction sequence of ubiquinone-8 (UQ-8) biosynthesis, which is the condensation of the polyisoprenoid side chain with PHB, generating the first membrane-bound Q intermediate 3-octaprenyl-4-hydroxybenzoate. This is 4-hydroxybenzoate octaprenyltransferase from Nitrosospira multiformis (strain ATCC 25196 / NCIMB 11849 / C 71).